Reading from the N-terminus, the 688-residue chain is Subtilisin-like protease 1 (688 aa).

Residues 1–25 (MMLNKKVVALCTLTLHLFCIFLCLG) form the signal peptide. The propeptide at 26 to 217 (KEVRSEENGK…IESDKLVSAD (192 aa)) is inhibition peptide. The tract at residues 99-129 (EKNKNDNHNNNNNNISSSSSSSSNTFGEEKE) is disordered. Positions 106–122 (HNNNNNNISSSSSSSSN) are enriched in low complexity. Asparagine 112 is a glycosylation site (N-linked (GlcNAc...) asparagine). Asparagine 145, threonine 148, and proline 150 together coordinate Ca(2+). A glycan (N-linked (GlcNAc...) asparagine) is linked at asparagine 171. Glycine 205 provides a ligand contact to Ca(2+). An N-linked (GlcNAc...) asparagine glycan is attached at asparagine 261. Disordered regions lie at residues 264–284 (HAAT…DTFS) and 303–332 (NNNN…RPGK). The segment covering 303–328 (NNNNYYYSHSSNGHNSSSRNSSSSRS) has biased composition (low complexity). Residues asparagine 317 and asparagine 322 are each glycosylated (N-linked (GlcNAc...) asparagine). Aspartate 337 lines the Ca(2+) pocket. Positions 343–661 (QWGLDLSRLD…AGYADINKAV (319 aa)) constitute a Peptidase S8 domain. 2 cysteine pairs are disulfide-bonded: cysteine 369/cysteine 479 and cysteine 458/cysteine 475. The active-site Charge relay system is aspartate 372. Residues aspartate 381, glutamate 392, arginine 396, phenylalanine 399, aspartate 400, aspartate 401, aspartate 402, asparagine 404, isoleucine 406, aspartate 408, and aspartate 409 each contribute to the Ca(2+) site. N-linked (GlcNAc...) asparagine glycosylation is present at asparagine 417. The active-site Charge relay system is the histidine 428. Ca(2+)-binding residues include isoleucine 439, asparagine 442, isoleucine 444, and valine 446. 3 N-linked (GlcNAc...) asparagine glycosylation sites follow: asparagine 488, asparagine 501, and asparagine 520. A disulfide bridge connects residues cysteine 521 and cysteine 534. An N-linked (GlcNAc...) asparagine glycan is attached at asparagine 603. Serine 606 acts as the Charge relay system in catalysis. Residue asparagine 675 is glycosylated (N-linked (GlcNAc...) asparagine).

This sequence belongs to the peptidase S8 family. As to quaternary structure, heterodimer between p54 form and prodomain p31; the interaction inhibits p54 catalytic activity. Heterodimer p31-p54 is monomeric at basic pH and dimeric at acidic pH; dimerization is driven by the N-terminal prodomain (p31). It depends on Ca(2+) as a cofactor. The prodomain (p31) is cleaved, probably by autocatalysis, during the transport to or in the Golgi apparatus, and remains non-covalently associated with the p54 form as an inhibitor. p54 is further cleaved into the p47 form. The p54-to-p47 conversion can be also autocatalytic. This cleavage is likely occurring in the exoneme prior to egress and is mediated by PMX/plasmepsin X. Heterodimer p31-p54 is activated by cleavage of prodomain (p31) by the aspartic protease PMX; cleavage by PMX abolishes inhibitory capacity of p31. Primary autocatalytic processing of SUB1 is essential for parasite growth; the p54-to-p47 conversion is dispensable for SUB1 functions in the parasites. In terms of processing, the disulfide bond between Cys-521 and Cys-534 acts as a redox-sensitive disulfide switch. The oxidized form is required for catalytic activity. Post-translationally, the relevance of the N-glycosylation is not clear. In an insect expression system, SUB1 glycosylation appears to affect its processing into the active mature form suggesting that SUB1 may not be N-glycosylated in parasites.

It localises to the secreted. It is found in the parasitophorous vacuole lumen. The catalysed reaction is Hydrolysis of proteins with broad specificity for peptide bonds, and a preference for a large uncharged residue in P1. Hydrolyzes peptide amides.. With respect to regulation, p54 and probably p47 forms are inhibited by the non-covalent interaction with the cleaved propeptide. Inhibited by subtilisin propeptide-like protein SUB1-ProM. Inhibited by small molecule MRT12113. In terms of biological role, serine protease which plays an essential role in merozoite invasion of and egress from host erythrocytes by processing and activating various merozoite surface and parasitophorous vacuole proteins. Mediates the proteolytic maturation of serine proteases SERA4, SERA5 and SERA6 just prior to merozoite egress. Prior to merozoite egress, cleaves merozoite surface proteins MSP1, MSP6 and MSP7, which form the MSP1/6/7 complex, and thereby may prime the parasite cell surface for invasion of fresh erythrocytes. Prior to merozoite egress, cleaves MSRP2 converting it to MSRP2 p25 form, and RAP1 converting it to RAP1 p67 form. The protein is Subtilisin-like protease 1 of Plasmodium falciparum (isolate 3D7).